The chain runs to 193 residues: Ribonuclease HII (193 aa).

The region spanning 15–193 (CIVAGIDEAG…PYHRRSFRCC (179 aa)) is the RNase H type-2 domain. A divalent metal cation contacts are provided by Asp-21, Glu-22, and Asp-112.

This sequence belongs to the RNase HII family. Mn(2+) serves as cofactor. Requires Mg(2+) as cofactor.

The protein localises to the cytoplasm. The enzyme catalyses Endonucleolytic cleavage to 5'-phosphomonoester.. In terms of biological role, endonuclease that specifically degrades the RNA of RNA-DNA hybrids. The chain is Ribonuclease HII from Rickettsia rickettsii (strain Iowa).